The following is a 188-amino-acid chain: Probable manganese efflux pump MntP (188 aa).

The next 5 helical transmembrane spans lie at 3 to 23 (ITATVLLAFGMSMDAFAASIG), 66 to 86 (LEWNHWIAFVLLIFLGGRMII), 106 to 128 (WLLVTTAIATSLDAMAVGVGLAF), 143 to 163 (ATLIMSTLGMMVGRFIGSIIG), and 168 to 188 (ILGGLVLIGIGVQILWTHFHG).

The protein belongs to the MntP (TC 9.B.29) family.

The protein resides in the cell inner membrane. Probably functions as a manganese efflux pump. This chain is Probable manganese efflux pump MntP, found in Escherichia coli O7:K1 (strain IAI39 / ExPEC).